We begin with the raw amino-acid sequence, 248 residues long: PF03932 family protein CutC (248 aa).

It belongs to the CutC family. Homodimer.

It is found in the cytoplasm. In Salmonella schwarzengrund (strain CVM19633), this protein is PF03932 family protein CutC.